The sequence spans 225 residues: UPF0128 protein PH1314 (225 aa).

The protein belongs to the UPF0128 family.

This is UPF0128 protein PH1314 from Pyrococcus horikoshii (strain ATCC 700860 / DSM 12428 / JCM 9974 / NBRC 100139 / OT-3).